A 344-amino-acid polypeptide reads, in one-letter code: Melanocyte-stimulating hormone receptor (344 aa).

At Met1–Glu37 the chain is on the extracellular side. N-linked (GlcNAc...) asparagine glycosylation occurs at Asn29. The chain crosses the membrane as a helical span at residues Val38–Ile63. Over Ala64–Ser72 the chain is Cytoplasmic. A helical transmembrane segment spans residues Met73–Leu93. Topologically, residues Glu94–Asn118 are extracellular. Residues Thr119 to Val140 form a helical membrane-spanning segment. Residues Asp141–Arg163 are Cytoplasmic-facing. The helical transmembrane segment at Ala164–Tyr183 threads the bilayer. The Extracellular portion of the chain corresponds to Asp184–Cys191. A helical membrane pass occupies residues Leu192 to Leu211. Over Ala212–Ala240 the chain is Cytoplasmic. Residues Ala241–Phe266 form a helical membrane-spanning segment. The Extracellular segment spans residues Cys267 to Asn279. The helical transmembrane segment at Phe280–Phe300 threads the bilayer. The Cytoplasmic portion of the chain corresponds to Arg301 to Pro344. Residue Cys315 is the site of S-palmitoyl cysteine attachment.

It belongs to the G-protein coupled receptor 1 family. Interacts with MGRN1, but does not undergo MGRN1-mediated ubiquitination; this interaction competes with GNAS-binding and thus inhibits agonist-induced cAMP production. Interacts with OPN3; the interaction results in a decrease in MC1R-mediated cAMP signaling and ultimately a decrease in melanin production in melanocytes.

The protein localises to the cell membrane. In terms of biological role, receptor for MSH (alpha, beta and gamma) and ACTH. The activity of this receptor is mediated by G proteins which activate adenylate cyclase. Mediates melanogenesis, the production of eumelanin (black/brown) and phaeomelanin (red/yellow), via regulation of cAMP signaling in melanocytes. This is Melanocyte-stimulating hormone receptor (MC1R) from Callimico goeldii (Goeldi's marmoset).